A 139-amino-acid polypeptide reads, in one-letter code: Large ribosomal subunit protein uL16 (139 aa).

It belongs to the universal ribosomal protein uL16 family. In terms of assembly, part of the 50S ribosomal subunit.

Its function is as follows. Binds 23S rRNA and is also seen to make contacts with the A and possibly P site tRNAs. The polypeptide is Large ribosomal subunit protein uL16 (Microcystis aeruginosa (strain NIES-843 / IAM M-2473)).